We begin with the raw amino-acid sequence, 448 residues long: Adenylosuccinate synthetase (448 aa).

GTP-binding positions include 36-42 (GDEGKGK) and 64-66 (GHT). The active-site Proton acceptor is the Asp37. Mg(2+) contacts are provided by Asp37 and Gly64. Residues 37–40 (DEGK), 62–65 (NAGH), Thr154, Arg168, Asn246, Thr261, and Arg325 contribute to the IMP site. The Proton donor role is filled by His65. 321-327 (VTTKRKR) contributes to the substrate binding site. GTP-binding positions include Arg327, 353 to 355 (KLD), and 436 to 438 (GVG).

Belongs to the adenylosuccinate synthetase family. As to quaternary structure, homodimer. The cofactor is Mg(2+).

The protein localises to the cytoplasm. The enzyme catalyses IMP + L-aspartate + GTP = N(6)-(1,2-dicarboxyethyl)-AMP + GDP + phosphate + 2 H(+). The protein operates within purine metabolism; AMP biosynthesis via de novo pathway; AMP from IMP: step 1/2. Its function is as follows. Plays an important role in the de novo pathway and in the salvage pathway of purine nucleotide biosynthesis. Catalyzes the first committed step in the biosynthesis of AMP from IMP. This Drosophila pseudoobscura pseudoobscura (Fruit fly) protein is Adenylosuccinate synthetase.